The following is a 113-amino-acid chain: Protein AaeX (113 aa).

2 helical membrane-spanning segments follow: residues 3–23 (LLPV…EMIL) and 43–63 (FVWH…YLIS).

The protein belongs to the AaeX family.

The protein localises to the cell membrane. This is Protein AaeX from Sodalis glossinidius (strain morsitans).